We begin with the raw amino-acid sequence, 2256 residues long: Death-inducer obliterator 1 (2256 aa).

Met-1 carries the N-acetylmethionine modification. The span at 1 to 25 (MDDKGHLSNEEAPKAIKPTSKEFRK) shows a compositional bias: basic and acidic residues. The tract at residues 1-256 (MDDKGHLSNE…NPREAGKPKP (256 aa)) is disordered. Composition is skewed to polar residues over residues 48 to 59 (SEQQPQQHNLSL) and 96 to 119 (EPTS…SSEI). 2 positions are modified to phosphoserine: Ser-58 and Ser-112. Residues 128-142 (LGKEHPASSEKAKGG) show a composition bias toward basic and acidic residues. Positions 143 to 153 (EEEEDTSDSDS) are enriched in acidic residues. At Thr-148 the chain carries Phosphothreonine. Ser-149 and Ser-151 each carry phosphoserine. 2 short sequence motifs (nuclear localization signal) span residues 162–170 (QNRLRRKRE) and 182–190 (QNRLRKKRR). Over residues 169-178 (REQEPVERSL) the composition is skewed to basic and acidic residues. 2 stretches are compositionally biased toward basic and acidic residues: residues 206 to 216 (EQDRPLCKQEP) and 246 to 256 (ENPREAGKPKP). The PHD-type zinc-finger motif lies at 265–319 (ALYCICRQPHNNRFMICCDRCEEWFHGDCVGISEARGRLLERNGEDYICPNCTIL). 7 disordered regions span residues 481–535 (LASR…DDRR), 598–624 (RPWP…ASKK), 641–668 (ANVP…SQIR), 778–822 (SRTK…PEKS), 856–970 (QVPS…TALS), 1011–1039 (AKPS…PPEG), and 1197–1218 (PSSA…QEEL). Positions 495–506 (ESSTPSWASDHN) are enriched in polar residues. Ser-522 is modified (phosphoserine). The region spanning 667-787 (IRQNIRRSLK…SRTKLLNESK (121 aa)) is the TFIIS central domain. Residues 778–788 (SRTKLLNESKK) are compositionally biased toward basic and acidic residues. Positions 797-812 (PDMEDSPPVSDSEEQQ) are enriched in acidic residues. Ser-802 and Ser-806 each carry phosphoserine. 2 stretches are compositionally biased toward basic and acidic residues: residues 875–886 (SKKEDFKPRHDS) and 921–935 (QERK…DSHP). Residue Lys-876 forms a Glycyl lysine isopeptide (Lys-Gly) (interchain with G-Cter in SUMO2) linkage. A Phosphoserine modification is found at Ser-886. The segment covering 937–962 (PSSLGGLSPSSASGGSGVVTTVTMSG) has biased composition (low complexity). 3 positions are modified to phosphoserine: Ser-1016, Ser-1027, and Ser-1035. The segment covering 1202-1215 (ELDKTDEKRTRLQQ) has biased composition (basic and acidic residues). A Phosphotyrosine modification is found at Tyr-1239. The disordered stretch occupies residues 1245–1288 (DTAATSTTPPGSPPPPPPLPEPPVLKILSSLKPGSTSTVTAPTT). At Thr-1252 the chain carries Phosphothreonine. The span at 1254–1267 (PGSPPPPPPLPEPP) shows a compositional bias: pro residues. Ser-1256 bears the Phosphoserine mark. Over residues 1279–1288 (STSTVTAPTT) the composition is skewed to low complexity. Position 1307 is a phosphoserine (Ser-1307). 4 disordered regions span residues 1320–1347 (KKSF…KGED), 1362–1421 (FGQF…VAYD), 1509–1609 (SDAL…EAKE), and 1630–2256 (QKCE…AAQA). Acidic residues predominate over residues 1371–1387 (LEEEEEDDRPYDPEEEY). The residue at position 1514 (Ser-1514) is a Phosphoserine. Residues 1526 to 1546 (LFSQEQQAPDPSQGAPNTNHN) show a composition bias toward polar residues. Residues 1547-1557 (LDSRQSRDPRQ) are compositionally biased toward basic and acidic residues. The span at 1649 to 1666 (PTAGDGAARPAPPRRVLL) shows a compositional bias: low complexity. Residues 1667 to 1679 (PTPPSTTFPPSFP) are compositionally biased toward pro residues. The segment covering 1699 to 1712 (TFMSQETSLGSSQY) has biased composition (polar residues). Ser-1726 is modified (phosphoserine). Residues 1783–1792 (FPGPRGPVPP) are compositionally biased toward pro residues. Position 1848 is an omega-N-methylarginine (Arg-1848). The segment covering 1855–1869 (FEDRKDPHGEKREFQ) has biased composition (basic and acidic residues). An asymmetric dimethylarginine mark is found at Arg-1904, Arg-1905, Arg-1988, Arg-1993, Arg-2004, Arg-2019, and Arg-2035. Basic and acidic residues-rich tracts occupy residues 2081–2113 (EFRE…KPLD) and 2123–2246 (RQGR…EART).

As to quaternary structure, interacts specifically (via PHD-type zinc finger) with histone H3 that is trimethylated at 'Lys-4' (H3K4me3), histone phosphorylation at 'Thr-3' or 'Thr-6' disrupts this binding and promotes translocation of DIDO1 from chromatin to the mitotic spindle during mitosis. Ubiquitous. Expressed at intermediate levels.

Its subcellular location is the cytoplasm. It is found in the nucleus. It localises to the cytoskeleton. The protein resides in the spindle. In terms of biological role, required for early embryonic stem cell development. Putative transcription factor, weakly pro-apoptotic when overexpressed. The polypeptide is Death-inducer obliterator 1 (Dido1) (Mus musculus (Mouse)).